Consider the following 361-residue polypeptide: MAQAGGAGAGAWGRRGAGAGAGPERAPWRWAPALLWLAAATAAAAAAGDPSRRQWPVPYKRFSFRPEPDPYCQAKYTFCPTGSPIPVMKDDDVIEVFRLQAPVWEFKYGDLLGHLKIMHDAIGFRSTLTEKNYTMEWYELFQLGNCTFPHLRPEMNAPFWCNQGAACFFEGIDDNHWKENGTLVLVATISGGMFNKMAKWVKQDNETGIYYETWTVQASPKKEAEKWFESYDCSKFVLRTYEKLAELGADFKKIETNYTRIFLYSGEPTYLGNETSVFGPTGNKTLALAIKKFYYPFKPHLSTKEFLLSLLQIFDAVVIHREFYLFYNFEYWFLPMKSPFIKITYEEIPLPNRKNRTLSGL.

The segment covering 1–21 (MAQAGGAGAGAWGRRGAGAGA) has biased composition (gly residues). Residues 1–24 (MAQAGGAGAGAWGRRGAGAGAGPE) are disordered. The Cytoplasmic segment spans residues 1-30 (MAQAGGAGAGAWGRRGAGAGAGPERAPWRW). Residues 31 to 48 (APALLWLAAATAAAAAAG) form a helical; Signal-anchor for type II membrane protein membrane-spanning segment. The Lumenal portion of the chain corresponds to 49–361 (DPSRRQWPVP…NRKNRTLSGL (313 aa)). 2 disulfides stabilise this stretch: cysteine 72-cysteine 161 and cysteine 79-cysteine 167. Histidine 119 serves as the catalytic Proton acceptor. Residues asparagine 132, asparagine 145, asparagine 180, and asparagine 205 are each glycosylated (N-linked (GlcNAc...) asparagine). Catalysis depends on cysteine 233, which acts as the Nucleophile; Acyl-thioester intermediate. Residues asparagine 257, asparagine 273, and asparagine 283 are each glycosylated (N-linked (GlcNAc...) asparagine). Positions 306-345 (FLLSLLQIFDAVVIHREFYLFYNFEYWFLPMKSPFIKITY) are membrane-anchoring. N-linked (GlcNAc...) asparagine glycosylation is present at asparagine 355.

This sequence belongs to the CLN5 family. In terms of assembly, multimer. Interacts with SORT1, RAB5A and RAB7A. Interacts with PPT1, TPP1, CLN3, CLN6, CLN8, ATP5F1A and ATP5F1B. In terms of processing, N-glycosylated with both high mannose and complex type sugars. Glycosylation is important for proper folding and trafficking to the lysosomes. The type II membrane signal anchor is proteolytically cleaved to produce a mature form that is transported to the lysosomes (Bis(monoacylglycero)phosphate synthase CLN5, secreted form). Post-translationally, can undergo proteolytic cleavage at the C-terminus, probably by a cysteine protease and may involve the removal of approximately 10-15 residues from the C-terminal end.

Its subcellular location is the lysosome. The protein resides in the membrane. The catalysed reaction is S-hexadecanoyl-L-cysteinyl-[protein] + H2O = L-cysteinyl-[protein] + hexadecanoate + H(+). The enzyme catalyses 2 1-acyl-sn-glycero-3-phospho-(1'-sn-glycerol) = 1-acyl-sn-glycero-3-phospho-(3'-acyl-sn-1'-glycerol) + sn-glycero-3-phospho-(1'-sn-glycerol). It carries out the reaction 2 1-(9Z-octadecenoyl)-sn-glycero-3-phospho-(1'-sn-glycerol) = 1-(9Z-octadecenoyl)-sn-glycero-3-phospho-(3'-(9Z-octadecenoyl)-1'-sn-glycerol) + sn-glycero-3-phospho-(1'-sn-glycerol). It catalyses the reaction 2 1-octadecanoyl-sn-glycero-3-phospho-(1'-sn-glycerol) = 1-octadecanoyl-sn-glycero-3-phospho-(3'-octadecanoyl-1'-sn-glycerol) + sn-glycero-3-phospho-(1'-sn-glycerol). The catalysed reaction is 2 1-hexadecanoyl-sn-glycero-3-phospho-(1'-sn-glycerol) = 1-hexadecanoyl-sn-glycero-3-phospho-(3'-hexadecanoyl-1'-sn-glycerol) + sn-glycero-3-phospho-(1'-sn-glycerol). The enzyme catalyses 2 1-tetradecanoyl-sn-glycero-3-phospho-(1'-sn-glycerol) = 1-tetradecanoyl-sn-glycero-3-phospho-(3'-tetradecanoyl-1'-sn-glycerol) + sn-glycero-3-phospho-(1'-sn-glycerol). Functionally, catalyzes the synthesis of bis(monoacylglycero)phosphate (BMP) via transacylation of 2 molecules of lysophosphatidylglycerol (LPG). BMP also known as lysobisphosphatidic acid plays a key role in the formation of intraluminal vesicles and in maintaining intracellular cholesterol homeostasis. Can use only LPG as the exclusive lysophospholipid acyl donor for base exchange and displays BMP synthase activity towards various LPGs (LPG 14:0, LPG 16:0, LPG 18:0, LPG 18:1) with a higher preference for longer chain lengths. Plays a role in influencing the retrograde trafficking of lysosomal sorting receptors SORT1 and IGF2R from the endosomes to the trans-Golgi network by controlling the recruitment of retromer complex to the endosomal membrane. Regulates the localization and activation of RAB7A which is required to recruit the retromer complex to the endosomal membrane. Its function is as follows. Exhibits palmitoyl protein thioesterase (S-depalmitoylation) activity in vitro and most likely plays a role in protein S-depalmitoylation. The polypeptide is Bis(monoacylglycero)phosphate synthase CLN5 (CLN5) (Ovis aries (Sheep)).